The following is a 67-amino-acid chain: Large ribosomal subunit protein bL31 (67 aa).

Zn(2+) contacts are provided by C16, C18, C36, and C39.

Belongs to the bacterial ribosomal protein bL31 family. Type A subfamily. In terms of assembly, part of the 50S ribosomal subunit. It depends on Zn(2+) as a cofactor.

Its function is as follows. Binds the 23S rRNA. The chain is Large ribosomal subunit protein bL31 from Treponema denticola (strain ATCC 35405 / DSM 14222 / CIP 103919 / JCM 8153 / KCTC 15104).